A 266-amino-acid polypeptide reads, in one-letter code: Phosphatidate cytidylyltransferase (266 aa).

The next 8 helical transmembrane spans lie at Phe-16–Ala-36, Leu-52–Ala-72, Pro-78–Ala-98, Ser-101–Tyr-121, Gly-125–Phe-145, Leu-164–Gly-184, Leu-186–Phe-206, and Leu-237–Trp-257.

It belongs to the CDS family.

The protein resides in the cell inner membrane. It catalyses the reaction a 1,2-diacyl-sn-glycero-3-phosphate + CTP + H(+) = a CDP-1,2-diacyl-sn-glycerol + diphosphate. The protein operates within phospholipid metabolism; CDP-diacylglycerol biosynthesis; CDP-diacylglycerol from sn-glycerol 3-phosphate: step 3/3. This Helicobacter pylori (strain ATCC 700392 / 26695) (Campylobacter pylori) protein is Phosphatidate cytidylyltransferase (cdsA).